The sequence spans 433 residues: Elongation factor 1-alpha (433 aa).

Residues 5–227 (KPHLNLVVIG…AFDFFKEPPR (223 aa)) enclose the tr-type G domain. Residues 14 to 21 (GHIDHGKS) form a G1 region. 14-21 (GHIDHGKS) provides a ligand contact to GTP. Ser-21 is a Mg(2+) binding site. A G2 region spans residues 70 to 74 (GITID). Residues 91-94 (DAPG) form a G3 region. Residues 91 to 95 (DAPGH) and 153 to 156 (NKMD) contribute to the GTP site. The segment at 153 to 156 (NKMD) is G4. Positions 192-194 (SAW) are G5.

It belongs to the TRAFAC class translation factor GTPase superfamily. Classic translation factor GTPase family. EF-Tu/EF-1A subfamily.

Its subcellular location is the cytoplasm. The enzyme catalyses GTP + H2O = GDP + phosphate + H(+). Its function is as follows. GTP hydrolase that promotes the GTP-dependent binding of aminoacyl-tRNA to the A-site of ribosomes during protein biosynthesis. The polypeptide is Elongation factor 1-alpha (Thermofilum pendens (strain DSM 2475 / Hrk 5)).